We begin with the raw amino-acid sequence, 402 residues long: E3 ubiquitin-protein ligase MARCHF11 (402 aa).

The segment covering Met1 to Arg11 has biased composition (gly residues). The tract at residues Met1–His161 is disordered. Residues Glu21–Pro56 are compositionally biased toward pro residues. Low complexity predominate over residues Glu111–Ala124. The RING-CH-type zinc finger occupies Gln162 to Ile222. Zn(2+) is bound by residues Cys170, Cys173, Cys186, Cys188, His196, Cys199, Cys212, and Cys215. Helical transmembrane passes span Met245–Ser265 and Ile278–Ile298. The short motif at Tyr371 to Leu374 is the YXXL motif element. The PDZ-binding motif lies at Val399–Val402.

In terms of assembly, interacts (YXXL motif) with AP1M1. Interacts (via PDZ-binding motif) with LIN7A. Interacts with unidentified fucose glycoproteins.

The protein localises to the cytoplasmic vesicle membrane. It carries out the reaction S-ubiquitinyl-[E2 ubiquitin-conjugating enzyme]-L-cysteine + [acceptor protein]-L-lysine = [E2 ubiquitin-conjugating enzyme]-L-cysteine + N(6)-ubiquitinyl-[acceptor protein]-L-lysine.. The protein operates within protein modification; protein ubiquitination. In terms of biological role, E3 ubiquitin-protein ligase that mediates polyubiquitination of CD4. E3 ubiquitin ligases accept ubiquitin from an E2 ubiquitin-conjugating enzyme in the form of a thioester and then directly transfer the ubiquitin to targeted substrates. May play a role in ubuquitin-dependent protein sorting in developmenting spermatids. The chain is E3 ubiquitin-protein ligase MARCHF11 from Homo sapiens (Human).